We begin with the raw amino-acid sequence, 173 residues long: HTH-type transcriptional regulator IscR (173 aa).

An HTH rrf2-type domain is found at Lys-2–Lys-131. A DNA-binding region (H-T-H motif) is located at residues Leu-28–Lys-51. [2Fe-2S] cluster contacts are provided by Cys-92, Cys-98, and Cys-104.

The cofactor is [2Fe-2S] cluster.

Functionally, regulates the transcription of several operons and genes involved in the biogenesis of Fe-S clusters and Fe-S-containing proteins. The protein is HTH-type transcriptional regulator IscR of Vibrio atlanticus (strain LGP32) (Vibrio splendidus (strain Mel32)).